The following is a 188-amino-acid chain: Adenine phosphoribosyltransferase (188 aa).

It belongs to the purine/pyrimidine phosphoribosyltransferase family. In terms of assembly, homodimer.

The protein localises to the cytoplasm. The catalysed reaction is AMP + diphosphate = 5-phospho-alpha-D-ribose 1-diphosphate + adenine. It participates in purine metabolism; AMP biosynthesis via salvage pathway; AMP from adenine: step 1/1. Its function is as follows. Catalyzes a salvage reaction resulting in the formation of AMP, that is energically less costly than de novo synthesis. This chain is Adenine phosphoribosyltransferase, found in Salinispora tropica (strain ATCC BAA-916 / DSM 44818 / JCM 13857 / NBRC 105044 / CNB-440).